The sequence spans 182 residues: ATP-dependent protease subunit HslV (182 aa).

Residue T2 is part of the active site. Residues G157, C160, and T163 each contribute to the Na(+) site.

It belongs to the peptidase T1B family. HslV subfamily. In terms of assembly, a double ring-shaped homohexamer of HslV is capped on each side by a ring-shaped HslU homohexamer. The assembly of the HslU/HslV complex is dependent on binding of ATP.

It is found in the cytoplasm. It catalyses the reaction ATP-dependent cleavage of peptide bonds with broad specificity.. Its activity is regulated as follows. Allosterically activated by HslU binding. Its function is as follows. Protease subunit of a proteasome-like degradation complex believed to be a general protein degrading machinery. The chain is ATP-dependent protease subunit HslV from Sodalis glossinidius (strain morsitans).